Reading from the N-terminus, the 367-residue chain is Heme A synthase (367 aa).

8 consecutive transmembrane segments (helical) span residues 26-46 (IRGWLAVVLFALFALVLVGGA), 111-131 (LLARGIGVIFALPLFFFWVTG), 139-159 (LPLLAILALGGLQGFIGWWMV), 174-194 (LATHLTIACVIFAACMWIYRG), 212-232 (AAVIAIFSLFQIYLGAIVAGL), 272-292 (FVHRLGAYLLLALVLWHMIAA), 305-325 (SVLLFALVVVQAAIGITTLLL), and 327-347 (VPIGWGVLHQGGALVVLGFAI). A heme-binding site is contributed by H274. Residue H335 coordinates heme.

The protein belongs to the COX15/CtaA family. Type 2 subfamily. In terms of assembly, interacts with CtaB. Heme b serves as cofactor.

The protein localises to the cell membrane. It carries out the reaction Fe(II)-heme o + 2 A + H2O = Fe(II)-heme a + 2 AH2. It functions in the pathway porphyrin-containing compound metabolism; heme A biosynthesis; heme A from heme O: step 1/1. Functionally, catalyzes the conversion of heme O to heme A by two successive hydroxylations of the methyl group at C8. The first hydroxylation forms heme I, the second hydroxylation results in an unstable dihydroxymethyl group, which spontaneously dehydrates, resulting in the formyl group of heme A. This Sinorhizobium medicae (strain WSM419) (Ensifer medicae) protein is Heme A synthase.